We begin with the raw amino-acid sequence, 274 residues long: Nitrogenase iron protein (274 aa).

8 to 15 (GKGGIGKS) contacts ATP. Cys-94 contributes to the [4Fe-4S] cluster binding site. An ADP-ribosylarginine; by dinitrogenase reductase ADP-ribosyltransferase modification is found at Arg-97. Cys-131 contacts [4Fe-4S] cluster.

Belongs to the NifH/BchL/ChlL family. In terms of assembly, homodimer. It depends on [4Fe-4S] cluster as a cofactor. Post-translationally, the reversible ADP-ribosylation of Arg-97 inactivates the nitrogenase reductase and regulates nitrogenase activity.

The catalysed reaction is N2 + 8 reduced [2Fe-2S]-[ferredoxin] + 16 ATP + 16 H2O = H2 + 8 oxidized [2Fe-2S]-[ferredoxin] + 2 NH4(+) + 16 ADP + 16 phosphate + 6 H(+). Functionally, the key enzymatic reactions in nitrogen fixation are catalyzed by the nitrogenase complex, which has 2 components: the iron protein and the molybdenum-iron protein. The chain is Nitrogenase iron protein from Dehalococcoides mccartyi (strain ATCC BAA-2266 / KCTC 15142 / 195) (Dehalococcoides ethenogenes (strain 195)).